A 307-amino-acid polypeptide reads, in one-letter code: Protein pid-3 (307 aa).

In terms of assembly, component of the pid-1 variant of the PETISCO complex (also called the pid-3, erh-2, tofu-6, and ife-3 small RNA complex) containing at least pid-1, tofu-6, ife-3, pid-3, and erh-2, which is required for the biogenesis of a class of 21 nucleotide PIWI-interacting RNAs (piRNAs) that possess a uracil residue at the 5'-end (also called 21U-RNAs). Within the complex interacts with pid-1; the interaction is direct. Component of the tost-1 variant of the PETISCO complex (also called the pid-3, erh-2, tofu-6, and ife-3 small RNA complex) containing at least tost-1, tofu-6, ife-3, pid-3, and erh-2, which plays an essential role in embryogenesis. Within the complex interacts with tost-1. Within the pid-1 and tost-1 variants of the PETISCO complexes interacts with tofu-6 (via the RRM domain) and erh-2. In contrast to the pid-1 variant of the PETISCO complex, the tost-1 variant of the PETISCO complex plays a minor role in the biogenesis of 21U-RNAs. Expressed in the germline (at protein level).

It is found in the cytoplasm. Its subcellular location is the perinuclear region. It localises to the nucleus. Component of the pid-1 and tost-1 variants of the PETISCO complexes, which have roles in the biogenesis of a class of 21 nucleotide PIWI-interacting RNAs (piRNAs) that possess a uracil residue at the 5'-end (also called 21U-RNAs) and embryogenesis, respectively. Within the pid-1 variant of the PETISCO complex may stabilize 21U-RNA precursor molecules. Promotes the biogenesis of 21U-RNAs. Required for chromosome segregation and cell division in early embryos. The polypeptide is Protein pid-3 (Caenorhabditis elegans).